Here is a 503-residue protein sequence, read N- to C-terminus: Adenosine deaminase 2-A (503 aa).

Residues 1 to 24 (MHVLFLGDLMWIYLLLLCCASCNG) form the signal peptide. 2 residues coordinate Zn(2+): histidine 105 and histidine 107. Aspartate 108 is a substrate binding site. N-linked (GlcNAc...) asparagine glycosylation is present at asparagine 120. A disulfide bridge links cysteine 130 with cysteine 152. Residues asparagine 167 and asparagine 178 are each glycosylated (N-linked (GlcNAc...) asparagine). Residues 197–204 (WERFEQVF) and histidine 286 each bind substrate. An N-linked (GlcNAc...) asparagine glycan is attached at asparagine 290. Glycine 319 serves as a coordination point for substrate. Histidine 349 contacts Zn(2+). Glutamate 352 functions as the Proton donor in the catalytic mechanism. Residue asparagine 371 is glycosylated (N-linked (GlcNAc...) asparagine). The active-site Proton acceptor is the histidine 377. Residue aspartate 434 coordinates Zn(2+). Aspartate 435 is a substrate binding site.

This sequence belongs to the metallo-dependent hydrolases superfamily. Adenosine and AMP deaminases family. ADGF subfamily. The cofactor is Zn(2+).

Its subcellular location is the secreted. It catalyses the reaction adenosine + H2O + H(+) = inosine + NH4(+). In terms of biological role, adenosine deaminase that may contribute to the degradation of extracellular adenosine, a signaling molecule that controls a variety of cellular responses. May play a role in the regulation of cell proliferation. The polypeptide is Adenosine deaminase 2-A (Danio rerio (Zebrafish)).